The following is an 804-amino-acid chain: Cell surface sensor MSB2 (804 aa).

A signal peptide spans 1-20 (MHNFSKLAVAFVAAASFASA). Topologically, residues 21–694 (EPETKAKVER…TNQSATQRGT (674 aa)) are extracellular. N-linked (GlcNAc...) asparagine glycosylation occurs at Asn-45. Low complexity-rich tracts occupy residues 46 to 58 (TTTP…SSTS) and 69 to 80 (SSFSSSASSSSA). Disordered regions lie at residues 46–90 (TTTP…RQPT) and 105–220 (TDST…ATSN). The tract at residues 46–475 (TTTPASEASS…SVAPTSATSS (430 aa)) is serine/threonine rich region (STR). Polar residues-rich tracts occupy residues 81–90 (QELTASRQPT) and 109–126 (PFSQ…SATG). Low complexity-rich tracts occupy residues 128–143 (VTPI…PSTA) and 150–169 (SALT…SVTS). Asn-157 is a glycosylation site (N-linked (GlcNAc...) asparagine). Residues 170-188 (PGSTSGPAGTPESSSASDF) show a composition bias toward polar residues. Low complexity predominate over residues 189-202 (TSAVATSRASTATS). Residues Asn-298, Asn-308, Asn-357, and Asn-393 are each glycosylated (N-linked (GlcNAc...) asparagine). Residues 345–394 (VQTLPPVSTPTANGTVTSPPVDSQTTVLPTTTPGLSSDTIVTSPGVTANS) are compositionally biased toward polar residues. The segment at 345–516 (VQTLPPVSTP…APTVLPSDLP (172 aa)) is disordered. 2 stretches are compositionally biased toward low complexity: residues 395–407 (TQVP…TIPT) and 427–476 (NNTV…TSSA). N-linked (GlcNAc...) asparagine glycans are attached at residues Asn-427 and Asn-433. The segment at 482 to 641 (WLPTTIIVQA…NGMLAHNLTM (160 aa)) is HKR11-MSB2 homology domain (HMH). The segment covering 493–508 (LPSTTGSSTNAPSSAP) has biased composition (polar residues). N-linked (GlcNAc...) asparagine glycosylation is found at Asn-629, Asn-638, Asn-669, Asn-683, and Asn-686. Residues 658 to 689 (KPAGAGSGTGGNGSNGPNDVFNNDNNSTNQSA) are disordered. Positions 660 to 671 (AGAGSGTGGNGS) are enriched in gly residues. Positions 672–686 (NGPNDVFNNDNNSTN) are enriched in low complexity. Residues 695–715 (VAGIAFGAVSLAAAYGAAMFI) traverse the membrane as a helical segment. Topologically, residues 716–804 (VARRYKKKRQ…VAQENSLGWN (89 aa)) are cytoplasmic. Disordered regions lie at residues 724–748 (RQAH…PALM) and 762–804 (GVMG…LGWN). Over residues 731-744 (SSVATPSEMRQSGS) the composition is skewed to polar residues. Residues 774-787 (GSNGSGRSAGNSAR) are compositionally biased toward low complexity.

The protein belongs to the HKR1/MSB2 family.

The protein resides in the cell membrane. The protein localises to the vacuole membrane. In terms of biological role, MSB2 and SHO1 have overlapping functions in recognizing various surface signals for MAPK PMK1 activation and appressorium formation. While MSB2 is critical for sensing surface hydrophobicity and cutin monomers, SHO1 may play a more important role in recognizing rice leaf waxes. The chain is Cell surface sensor MSB2 from Pyricularia oryzae (strain 70-15 / ATCC MYA-4617 / FGSC 8958) (Rice blast fungus).